The sequence spans 303 residues: Probable 5-dehydro-4-deoxyglucarate dehydratase (303 aa).

This sequence belongs to the DapA family.

The enzyme catalyses 5-dehydro-4-deoxy-D-glucarate + H(+) = 2,5-dioxopentanoate + CO2 + H2O. It participates in carbohydrate acid metabolism; D-glucarate degradation; 2,5-dioxopentanoate from D-glucarate: step 2/2. The protein is Probable 5-dehydro-4-deoxyglucarate dehydratase of Leptothrix cholodnii (strain ATCC 51168 / LMG 8142 / SP-6) (Leptothrix discophora (strain SP-6)).